Consider the following 172-residue polypeptide: Small ribosomal subunit protein uS5 (172 aa).

The region spanning 17 to 80 (LREKMISVNR…DEARRKMVKV (64 aa)) is the S5 DRBM domain.

It belongs to the universal ribosomal protein uS5 family. In terms of assembly, part of the 30S ribosomal subunit. Contacts proteins S4 and S8.

With S4 and S12 plays an important role in translational accuracy. In terms of biological role, located at the back of the 30S subunit body where it stabilizes the conformation of the head with respect to the body. This is Small ribosomal subunit protein uS5 from Cupriavidus taiwanensis (strain DSM 17343 / BCRC 17206 / CCUG 44338 / CIP 107171 / LMG 19424 / R1) (Ralstonia taiwanensis (strain LMG 19424)).